The sequence spans 439 residues: Chromosomal replication initiator protein DnaA (439 aa).

Residues 1-75 (MESWSRCLER…GIREVVLAIG (75 aa)) are domain I, interacts with DnaA modulators. A domain II region spans residues 75–101 (GSRPKTTELPVPVDTTGRLSSTVPFNG). The domain III, AAA+ region stretch occupies residues 102 to 319 (NLDTHYNFDN…GALNTLVARA (218 aa)). Residues Gly-147, Gly-149, Lys-150, and Thr-151 each coordinate ATP. The tract at residues 320 to 439 (NFTGRAVTIE…WDKLMRKFSE (120 aa)) is domain IV, binds dsDNA.

The protein belongs to the DnaA family. In terms of assembly, oligomerizes as a right-handed, spiral filament on DNA at oriC.

The protein localises to the cytoplasm. Plays an essential role in the initiation and regulation of chromosomal replication. ATP-DnaA binds to the origin of replication (oriC) to initiate formation of the DNA replication initiation complex once per cell cycle. Binds the DnaA box (a 9 base pair repeat at the origin) and separates the double-stranded (ds)DNA. Forms a right-handed helical filament on oriC DNA; dsDNA binds to the exterior of the filament while single-stranded (ss)DNA is stabiized in the filament's interior. The ATP-DnaA-oriC complex binds and stabilizes one strand of the AT-rich DNA unwinding element (DUE), permitting loading of DNA polymerase. After initiation quickly degrades to an ADP-DnaA complex that is not apt for DNA replication. Binds acidic phospholipids. The polypeptide is Chromosomal replication initiator protein DnaA (Xylella fastidiosa (strain 9a5c)).